Consider the following 243-residue polypeptide: Protein GID8 homolog (243 aa).

Residues 40 to 72 (RKEDMNTLVMNFLVTEGYVEAAEKFQRESGTKP) form the LisH domain. A CTLH domain is found at 78–135 (TITDRMAVKKAVQNGNVEDAIEKVNDLNPEILDTNPELFFHLQQQRLIELIRQGKTEE).

Belongs to the GID8 family. As to quaternary structure, interacts with RANBPM.

The protein localises to the cytoplasm. The protein is Protein GID8 homolog of Arabidopsis thaliana (Mouse-ear cress).